The sequence spans 176 residues: MYSPSSSNYIKDPISTEIIKSKTRNLKKRAEEAILYRSIAEQSSRKLAEISEAYKHKLADMENYLKIKDRETEIIRKNANESLIKDFLPVIDSMDAAIQAEKDNNLIRIRDQMLSILSKYGLQPIKAEGEKFDPYLHEAIGMTQDGEDGKIKYEVQRGYTLNNSVLRTSKVIVVKR.

The protein belongs to the GrpE family. Homodimer.

The protein localises to the cytoplasm. Its function is as follows. Participates actively in the response to hyperosmotic and heat shock by preventing the aggregation of stress-denatured proteins, in association with DnaK and GrpE. It is the nucleotide exchange factor for DnaK and may function as a thermosensor. Unfolded proteins bind initially to DnaJ; upon interaction with the DnaJ-bound protein, DnaK hydrolyzes its bound ATP, resulting in the formation of a stable complex. GrpE releases ADP from DnaK; ATP binding to DnaK triggers the release of the substrate protein, thus completing the reaction cycle. Several rounds of ATP-dependent interactions between DnaJ, DnaK and GrpE are required for fully efficient folding. This Thermoplasma volcanium (strain ATCC 51530 / DSM 4299 / JCM 9571 / NBRC 15438 / GSS1) protein is Protein GrpE.